The following is a 231-amino-acid chain: Adenosine 5'-phosphosulfate reductase (231 aa).

Cys-118, Cys-119, Cys-201, and Cys-204 together coordinate [4Fe-4S] cluster. Residue Cys-227 is the Nucleophile; cysteine thiosulfonate intermediate of the active site.

The protein belongs to the PAPS reductase family. CysH subfamily. It depends on [4Fe-4S] cluster as a cofactor.

The protein resides in the cytoplasm. It carries out the reaction [thioredoxin]-disulfide + sulfite + AMP + 2 H(+) = adenosine 5'-phosphosulfate + [thioredoxin]-dithiol. The protein operates within sulfur metabolism; hydrogen sulfide biosynthesis; sulfite from sulfate. Its function is as follows. Catalyzes the formation of sulfite from adenosine 5'-phosphosulfate (APS) using thioredoxin as an electron donor. This Halalkalibacterium halodurans (strain ATCC BAA-125 / DSM 18197 / FERM 7344 / JCM 9153 / C-125) (Bacillus halodurans) protein is Adenosine 5'-phosphosulfate reductase.